Reading from the N-terminus, the 1226-residue chain is DNA-directed RNA polymerase subunit beta'' (1226 aa).

4 residues coordinate Zn(2+): cysteine 223, cysteine 297, cysteine 304, and cysteine 307.

This sequence belongs to the RNA polymerase beta' chain family. RpoC2 subfamily. As to quaternary structure, in plastids the minimal PEP RNA polymerase catalytic core is composed of four subunits: alpha, beta, beta', and beta''. When a (nuclear-encoded) sigma factor is associated with the core the holoenzyme is formed, which can initiate transcription. Requires Zn(2+) as cofactor.

It is found in the plastid. The protein localises to the chloroplast. The catalysed reaction is RNA(n) + a ribonucleoside 5'-triphosphate = RNA(n+1) + diphosphate. Its function is as follows. DNA-dependent RNA polymerase catalyzes the transcription of DNA into RNA using the four ribonucleoside triphosphates as substrates. In Pyropia yezoensis (Susabi-nori), this protein is DNA-directed RNA polymerase subunit beta''.